A 307-amino-acid polypeptide reads, in one-letter code: Acyl transferase (307 aa).

Catalysis depends on charge relay system residues S116, D213, and H243.

The protein belongs to the LuxD family.

It participates in lipid metabolism; fatty acid reduction for biolumincescence. In terms of biological role, acyl transferase is part of the fatty acid reductase system required for aldehyde biosynthesis; it produces fatty acids for the luminescent reaction. The chain is Acyl transferase from Aliivibrio fischeri (strain ATCC 700601 / ES114) (Vibrio fischeri).